We begin with the raw amino-acid sequence, 1009 residues long: MKKKNWIYALIVTLIIIIAIVSMIFFVQTKYGDQSEKGSQSVSNKNNKIHIAIVNEDQPTTYNGKKVELGQAFIKRLANEKNYKFETVTRNVAESGLKNGGYQVMIVIPENFSKLAMQLDAKTPSKISLQYKTAVGQKEEVAKNTEKVVSNVLNDFNKNLVEIYLTSIIDNLHNAQKNVGAIMTREHGVNSKFSNYLLNPINDFPELFTDTLVNSISANKDITKWFQTYNKSLLSANSDTFRVNTDYNVSTLIEKQNSLFDEHNTAMDKMLQDYKSQKDSVELDNYINALKQMDSQIDQQSSMQDTGKEEYKQTVKENLDKLREIIQSQESPFSKGMIEDYRKQLTESLQDELANNKDLQDALNSIKMNNAQFAENLEKQLHDDIVKEPDTDTTFIYNMSKQDFIAAGLNEGEANKYEAIVKEAKRYKNEYNLKKPLAEHINLTDYDNQVAQDTSSLINDGVKVQRTETIKSNDINQLTVATDPHFNFEGDIKINGKKYDIKDQSVQLDTSNKEYKVEVNGVAKLKKDAEKDFLKDKTMHLQLLFGQANRQDEPNDKKATSVVDVTLNHNLDGRLSKDALSQQLSALSRFDAHYKMYTDTKGREDKPFDNKRLIDMMVDQVINDMESFKDDKVAVLHQIDSMEENSDKLIDDILNNKKNTTKNKEDISKLIDQLENVKKTFAEEPQEPKIDKGKNDEFNTMSSNLDKEISRISEKSTQLLSDTQESKSIADSVSGQLNQVDNNVNKLHATGRALGVRANDLNRQMAKNDKDNELFAKEFKKVLQNSKDGDRQNQALKAFMSNPVQKKNLENVLANNGNTDVISPTLFVLLMYLLSMITAYIFYSYERAKGQMNFIKDDYSSKNHLWNNVITSGVIGTTGLVEGLIVGLIAMNKFHVLAGYRAKFILMVILTMMVFVLINTYLLRQVKSIGMFLMIAALGLYFVAMNNLKAAGQGVTNKISPLSYIDNMFFNYLNAEHPIGLVLVILTVLVIIGFVLNMFIKHFKKERLI.

A helical membrane pass occupies residues 7–27 (IYALIVTLIIIIAIVSMIFFV). The span at 680–697 (TFAEEPQEPKIDKGKNDE) shows a compositional bias: basic and acidic residues. Residues 680-707 (TFAEEPQEPKIDKGKNDEFNTMSSNLDK) form a disordered region. The next 5 helical transmembrane spans lie at 822-842 (ISPT…AYIF), 869-889 (VITS…VGLI), 903-923 (KFIL…TYLL), 928-948 (SIGM…MNNL), and 979-999 (IGLV…LNMF).

This sequence belongs to the EsaA family. As to quaternary structure, homodimer. Interacts with EssB.

It localises to the cell membrane. Functionally, component of the type VII secretion system (Ess). Provides together with EssB and other components such as EssC and EssE a secretion platform across the cytoplasmic membrane in the host. This chain is Type VII secretion system accessory factor EsaA, found in Staphylococcus aureus (strain COL).